The primary structure comprises 256 residues: 5-oxoprolinase subunit A 3 (256 aa).

It belongs to the LamB/PxpA family. In terms of assembly, forms a complex composed of PxpA, PxpB and PxpC.

It carries out the reaction 5-oxo-L-proline + ATP + 2 H2O = L-glutamate + ADP + phosphate + H(+). In terms of biological role, catalyzes the cleavage of 5-oxoproline to form L-glutamate coupled to the hydrolysis of ATP to ADP and inorganic phosphate. This Pseudomonas syringae pv. tomato (strain ATCC BAA-871 / DC3000) protein is 5-oxoprolinase subunit A 3.